The following is a 164-amino-acid chain: Photosystem II extrinsic protein V (164 aa).

The first 27 residues, 1 to 27, serve as a signal peptide directing secretion; that stretch reads MNRISIYRIKVLAFLFAVSTYVYPASS. Cys-64, Cys-67, His-68, and His-119 together coordinate heme c.

The protein belongs to the cytochrome c family. PsbV subfamily. In terms of assembly, PSII is composed of 1 copy each of membrane proteins PsbA, PsbB, PsbC, PsbD, PsbE, PsbF, PsbH, PsbI, PsbJ, PsbK, PsbL, PsbM, PsbT, PsbY, PsbZ, Psb30/Ycf12, at least 3 peripheral proteins of the oxygen-evolving complex and a large number of cofactors. It forms dimeric complexes. The extrinsic subunits in red algae are PsbO (OEC33), PsbQ', cytochrome c-550 and PsbU. Heme c is required as a cofactor.

It is found in the plastid. The protein resides in the chloroplast thylakoid membrane. In terms of biological role, one of the extrinsic, lumenal subunits of photosystem II (PSII). PSII is a light-driven water plastoquinone oxidoreductase, using light energy to abstract electrons from H(2)O, generating a proton gradient subsequently used for ATP formation. The extrinsic proteins stabilize the structure of photosystem II oxygen-evolving complex (OEC), the ion environment of oxygen evolution and protect the OEC against heat-induced inactivation. The protein is Photosystem II extrinsic protein V of Cyanidium caldarium (Red alga).